Here is a 288-residue protein sequence, read N- to C-terminus: tRNA dimethylallyltransferase (288 aa).

17-24 (GPTASGKT) contributes to the ATP binding site. 19 to 24 (TASGKT) is a substrate binding site.

Belongs to the IPP transferase family. As to quaternary structure, monomer. The cofactor is Mg(2+).

The enzyme catalyses adenosine(37) in tRNA + dimethylallyl diphosphate = N(6)-dimethylallyladenosine(37) in tRNA + diphosphate. Functionally, catalyzes the transfer of a dimethylallyl group onto the adenine at position 37 in tRNAs that read codons beginning with uridine, leading to the formation of N6-(dimethylallyl)adenosine (i(6)A). This Jannaschia sp. (strain CCS1) protein is tRNA dimethylallyltransferase.